A 386-amino-acid polypeptide reads, in one-letter code: Succinate--CoA ligase [ADP-forming] subunit beta (386 aa).

Positions 9 to 244 constitute an ATP-grasp domain; that stretch reads KDLLTSYQLP…PSQENIRDVL (236 aa). Residues Lys46, 53 to 55, Val102, and Glu107 contribute to the ATP site; that span reads GRG. Positions 199 and 213 each coordinate Mg(2+). Substrate-binding positions include Asn264 and 321–323; that span reads GIM.

This sequence belongs to the succinate/malate CoA ligase beta subunit family. As to quaternary structure, heterotetramer of two alpha and two beta subunits. It depends on Mg(2+) as a cofactor.

It carries out the reaction succinate + ATP + CoA = succinyl-CoA + ADP + phosphate. It catalyses the reaction GTP + succinate + CoA = succinyl-CoA + GDP + phosphate. It participates in carbohydrate metabolism; tricarboxylic acid cycle; succinate from succinyl-CoA (ligase route): step 1/1. Functionally, succinyl-CoA synthetase functions in the citric acid cycle (TCA), coupling the hydrolysis of succinyl-CoA to the synthesis of either ATP or GTP and thus represents the only step of substrate-level phosphorylation in the TCA. The beta subunit provides nucleotide specificity of the enzyme and binds the substrate succinate, while the binding sites for coenzyme A and phosphate are found in the alpha subunit. The sequence is that of Succinate--CoA ligase [ADP-forming] subunit beta from Chlamydia muridarum (strain MoPn / Nigg).